The following is a 450-amino-acid chain: Glutamate--tRNA ligase 2 (450 aa).

Residues 10–20 (PSPTGRIHIGN) carry the 'HIGH' region motif. The short motif at 243 to 247 (GFSKR) is the 'KMSKS' region element. Lys246 provides a ligand contact to ATP.

Belongs to the class-I aminoacyl-tRNA synthetase family. Glutamate--tRNA ligase type 1 subfamily. In terms of assembly, monomer.

The protein localises to the cytoplasm. It carries out the reaction tRNA(Glu) + L-glutamate + ATP = L-glutamyl-tRNA(Glu) + AMP + diphosphate. Its function is as follows. Catalyzes the attachment of glutamate to tRNA(Glu) in a two-step reaction: glutamate is first activated by ATP to form Glu-AMP and then transferred to the acceptor end of tRNA(Glu). The polypeptide is Glutamate--tRNA ligase 2 (Beijerinckia indica subsp. indica (strain ATCC 9039 / DSM 1715 / NCIMB 8712)).